Here is a 173-residue protein sequence, read N- to C-terminus: Small ribosomal subunit protein uS7 (173 aa).

It belongs to the universal ribosomal protein uS7 family. Part of the 30S ribosomal subunit. Contacts proteins S9 and S11.

One of the primary rRNA binding proteins, it binds directly to 16S rRNA where it nucleates assembly of the head domain of the 30S subunit. Is located at the subunit interface close to the decoding center, probably blocks exit of the E-site tRNA. The protein is Small ribosomal subunit protein uS7 of Orientia tsutsugamushi (strain Ikeda) (Rickettsia tsutsugamushi).